The primary structure comprises 776 residues: Protein translocase subunit SecA 2 (776 aa).

Residues Gln-80, 98–102 (GEGKT), and Asp-486 each bind ATP.

The protein belongs to the SecA family. Monomer and homodimer. Part of the essential Sec protein translocation apparatus which comprises SecA, SecYEG and auxiliary proteins SecDF. Other proteins may also be involved.

It localises to the cell membrane. The protein resides in the cytoplasm. It carries out the reaction ATP + H2O + cellular proteinSide 1 = ADP + phosphate + cellular proteinSide 2.. Its function is as follows. Part of the Sec protein translocase complex. Interacts with the SecYEG preprotein conducting channel. Has a central role in coupling the hydrolysis of ATP to the transfer of proteins into and across the cell membrane, serving as an ATP-driven molecular motor driving the stepwise translocation of polypeptide chains across the membrane. The polypeptide is Protein translocase subunit SecA 2 (Listeria monocytogenes serovar 1/2a (strain ATCC BAA-679 / EGD-e)).